A 118-amino-acid polypeptide reads, in one-letter code: MICOS complex subunit MIC13 (118 aa).

Residues 1–7 (MVPRVWS) are Mitochondrial matrix-facing. The chain crosses the membrane as a helical span at residues 8-26 (LMRFLIKGSVAGGAIYLVY). Over 27–118 (DQDPLGPSDK…GWEYLKERTK (92 aa)) the chain is Mitochondrial intermembrane.

Belongs to the MICOS complex subunit Mic13 family. Component of the mitochondrial contact site and cristae organizing system (MICOS) complex, composed of at least MICOS10/MIC10, CHCHD3/MIC19, CHCHD6/MIC25, APOO/MIC26, MICOS13/MIC13, APOOL/MIC27 and IMMT/MIC60. The MICOS complex associates with mitochondrial outer membrane proteins SAMM50, MTX1 and MTX2 (together described as components of the mitochondrial outer membrane sorting assembly machinery (SAM) complex) and DNAJC11, mitochondrial inner membrane protein TMEM11 and with HSPA9. The MICOS and SAM complexes together with DNAJC11 are part of a large protein complex spanning both membranes termed the mitochondrial intermembrane space bridging (MIB) complex.

It is found in the mitochondrion inner membrane. Component of the MICOS complex, a large protein complex of the mitochondrial inner membrane that plays crucial roles in the maintenance of crista junctions, inner membrane architecture, and formation of contact sites to the outer membrane. Constituent of mature MICOS complex, it is required for the formation of cristae junction (CJ) and maintenance of cristae morphology. Required for the incorporation of MICOS10/MIC10 into the MICOS complex. This Sus scrofa (Pig) protein is MICOS complex subunit MIC13.